The primary structure comprises 95 residues: Large ribosomal subunit protein uL22c (95 aa).

It belongs to the universal ribosomal protein uL22 family. Part of the 50S ribosomal subunit.

Its subcellular location is the plastid. It is found in the chloroplast. Functionally, this protein binds specifically to 23S rRNA. Its function is as follows. The globular domain of the protein is located near the polypeptide exit tunnel on the outside of the subunit, while an extended beta-hairpin is found that lines the wall of the exit tunnel in the center of the 70S ribosome. The sequence is that of Large ribosomal subunit protein uL22c (rpl22) from Cyanidioschyzon merolae (strain NIES-3377 / 10D) (Unicellular red alga).